The primary structure comprises 209 residues: Orotate phosphoribosyltransferase (209 aa).

5-phospho-alpha-D-ribose 1-diphosphate-binding positions include R96, K100, H102, and 122 to 130; that span reads EDLISTGGS. An orotate-binding site is contributed by S126.

This sequence belongs to the purine/pyrimidine phosphoribosyltransferase family. PyrE subfamily. In terms of assembly, homodimer. Mg(2+) serves as cofactor.

The catalysed reaction is orotidine 5'-phosphate + diphosphate = orotate + 5-phospho-alpha-D-ribose 1-diphosphate. It functions in the pathway pyrimidine metabolism; UMP biosynthesis via de novo pathway; UMP from orotate: step 1/2. Functionally, catalyzes the transfer of a ribosyl phosphate group from 5-phosphoribose 1-diphosphate to orotate, leading to the formation of orotidine monophosphate (OMP). The sequence is that of Orotate phosphoribosyltransferase from Streptococcus thermophilus (strain ATCC BAA-491 / LMD-9).